A 248-amino-acid chain; its full sequence is Triosephosphate isomerase (248 aa).

A substrate-binding site is contributed by 9–11; the sequence is NWK. The active-site Electrophile is the histidine 94. Residue glutamate 166 is the Proton acceptor of the active site. Substrate-binding positions include glycine 172, serine 212, and 233 to 234; that span reads GG.

This sequence belongs to the triosephosphate isomerase family. As to quaternary structure, homodimer.

The protein resides in the cytoplasm. The catalysed reaction is D-glyceraldehyde 3-phosphate = dihydroxyacetone phosphate. The protein operates within carbohydrate biosynthesis; gluconeogenesis. Its pathway is carbohydrate degradation; glycolysis; D-glyceraldehyde 3-phosphate from glycerone phosphate: step 1/1. Involved in the gluconeogenesis. Catalyzes stereospecifically the conversion of dihydroxyacetone phosphate (DHAP) to D-glyceraldehyde-3-phosphate (G3P). The chain is Triosephosphate isomerase from Clostridium perfringens (strain ATCC 13124 / DSM 756 / JCM 1290 / NCIMB 6125 / NCTC 8237 / Type A).